A 360-amino-acid chain; its full sequence is Mannonate dehydratase (360 aa).

Belongs to the mannonate dehydratase family. Requires Fe(2+) as cofactor. It depends on Mn(2+) as a cofactor.

It catalyses the reaction D-mannonate = 2-dehydro-3-deoxy-D-gluconate + H2O. It participates in carbohydrate metabolism; pentose and glucuronate interconversion. Catalyzes the dehydration of D-mannonate. This chain is Mannonate dehydratase (uxuA), found in Thermotoga neapolitana.